A 42-amino-acid polypeptide reads, in one-letter code: Histone H1B (42 aa).

Positions 1 to 42 (TYYELIKAAILALKERNGSSAQAIKKYILENNKIEFQQTFLR) constitute an H15 domain.

It belongs to the histone H1/H5 family.

The protein resides in the nucleus. It is found in the chromosome. Histones H1 are necessary for the condensation of nucleosome chains into higher-order structures. This Olisthodiscus luteus (Marine phytoflagellate) protein is Histone H1B.